Reading from the N-terminus, the 213-residue chain is MKYFATICIAAYAGLAGAGGLKSLEVFVKTVNTGRADFTQVVTAPAKAGQAPRVKTSSGTFEFSRPNRFKFVYKKPFEQNIVADGQTLWLYDVDLNQVTARQQSKVLGSTPAALIAAAPDLRALQADFTLADAPDKDGLQWAAATPKSKDGQLQSVRVGFRAGEQAAELAALEILDSFGQRSVLSFSRFEVNPALPGNSFQFKPPAGADVIRQ.

An N-terminal signal peptide occupies residues 1–18 (MKYFATICIAAYAGLAGA).

Belongs to the LolA family. Monomer.

The protein resides in the periplasm. Its function is as follows. Participates in the translocation of lipoproteins from the inner membrane to the outer membrane. Only forms a complex with a lipoprotein if the residue after the N-terminal Cys is not an aspartate (The Asp acts as a targeting signal to indicate that the lipoprotein should stay in the inner membrane). In Albidiferax ferrireducens (strain ATCC BAA-621 / DSM 15236 / T118) (Rhodoferax ferrireducens), this protein is Outer-membrane lipoprotein carrier protein.